The primary structure comprises 384 residues: GTPase Obg (384 aa).

The Obg domain maps to 1-159 (MKFIDEAKIE…RSLQLELKVL (159 aa)). The interval 20–46 (ATSFRREKFVPRGGPDGGDGGKGGSVW) is disordered. Residues 33–43 (GPDGGDGGKGG) are compositionally biased toward gly residues. The region spanning 160–348 (ADVGLLGMPN…LVHQINQYLT (189 aa)) is the OBG-type G domain. GTP-binding positions include 166 to 173 (GMPNAGKS), 191 to 195 (FTTLH), 213 to 216 (DIPG), 284 to 287 (NKLD), and 329 to 331 (SAL). Mg(2+) contacts are provided by S173 and T193.

It belongs to the TRAFAC class OBG-HflX-like GTPase superfamily. OBG GTPase family. In terms of assembly, monomer. Mg(2+) serves as cofactor.

It localises to the cytoplasm. An essential GTPase which binds GTP, GDP and possibly (p)ppGpp with moderate affinity, with high nucleotide exchange rates and a fairly low GTP hydrolysis rate. Plays a role in control of the cell cycle, stress response, ribosome biogenesis and in those bacteria that undergo differentiation, in morphogenesis control. This is GTPase Obg from Neisseria meningitidis serogroup B (strain ATCC BAA-335 / MC58).